The following is a 312-amino-acid chain: Small ribosomal subunit protein RACK1 (312 aa).

7 WD repeats span residues glycine 9–lysine 42, glycine 63–aspartate 93, lysine 105–asparagine 135, glycine 148–asparagine 180, glycine 192–aspartate 222, asparagine 233–aspartate 262, and proline 279–serine 307.

It belongs to the WD repeat G protein beta family. Ribosomal protein RACK1 subfamily.

In Leishmania major, this protein is Small ribosomal subunit protein RACK1.